A 590-amino-acid polypeptide reads, in one-letter code: KNR4/SMI1 homolog 2 (590 aa).

3 disordered regions span residues Ser-59–Asn-97, Phe-216–Gly-239, and Thr-407–Leu-590. Residues Gly-71–Val-85 show a composition bias toward polar residues. Residues Gln-217–Gln-226 are compositionally biased toward low complexity. Residues Pro-430–Lys-454 are compositionally biased toward polar residues. 2 stretches are compositionally biased toward basic and acidic residues: residues Pro-470–Ser-481 and Glu-489–Asp-515. Residues Asp-516–Lys-528 are compositionally biased toward acidic residues. Residues Thr-554–Gln-568 show a composition bias toward basic residues. Acidic residues predominate over residues Asn-576–Leu-590.

It belongs to the KNR4/SMI1 family.

The protein is KNR4/SMI1 homolog 2 of Debaryomyces hansenii (strain ATCC 36239 / CBS 767 / BCRC 21394 / JCM 1990 / NBRC 0083 / IGC 2968) (Yeast).